Here is a 315-residue protein sequence, read N- to C-terminus: Putative glycosyltransferase ORF315 (315 aa).

The protein belongs to the glycosyltransferase group 1 family. Glycosyltransferase 4 subfamily.

This Acidianus convivator (ABV) protein is Putative glycosyltransferase ORF315.